Consider the following 626-residue polypeptide: Serine/threonine-protein kinase ATG1a (626 aa).

One can recognise a Protein kinase domain in the interval 10-268; sequence YALGPRIGSG…FREFFNHMFL (259 aa). ATP contacts are provided by residues 16 to 24 and lysine 39; that span reads IGSGSFAVV. The active-site Proton acceptor is aspartate 132. Residues 288 to 308 show a composition bias toward polar residues; it reads KSLLPSAQPSTSTNRFKSSAE. Positions 288–347 are disordered; it reads KSLLPSAQPSTSTNRFKSSAENVHKHGSSSSASNSQISMPHTSFEKTRKDTEGQCSSNQS. Residues 315–325 show a composition bias toward low complexity; it reads SSSSASNSQIS. Over residues 330–339 the composition is skewed to basic and acidic residues; that stretch reads SFEKTRKDTE. The AIM (Atg8-family-interacting motif) motif lies at 360-363; the sequence is YVLV.

This sequence belongs to the protein kinase superfamily. Ser/Thr protein kinase family. As to quaternary structure, interacts with ATG13A. Interacts with ATG8E. Binds to ATG8E on autophagic vesicles. Phosphorylated during nutrient starvation. Dephosphorylated in nutrient-rich conditions.

Its subcellular location is the cytoplasmic vesicle. It is found in the autophagosome. In terms of biological role, serine/threonine protein kinase involved in autophagy in a nutritional condition-dependent manner. The ATG1-ATG13 protein kinase complex regulates downstream events required for autophagosome enclosure and/or vacuolar delivery. Becomes a target of autophagy under nutrient starvation. Connects autophagy to plant nutritional status. The sequence is that of Serine/threonine-protein kinase ATG1a from Arabidopsis thaliana (Mouse-ear cress).